We begin with the raw amino-acid sequence, 1409 residues long: DNA-directed RNA polymerase subunit beta' (1409 aa).

The Zn(2+) site is built by Cys70, Cys72, Cys85, and Cys88. Residues Asp458, Asp460, and Asp462 each contribute to the Mg(2+) site. Zn(2+) contacts are provided by Cys813, Cys887, Cys894, and Cys897.

It belongs to the RNA polymerase beta' chain family. As to quaternary structure, the RNAP catalytic core consists of 2 alpha, 1 beta, 1 beta' and 1 omega subunit. When a sigma factor is associated with the core the holoenzyme is formed, which can initiate transcription. It depends on Mg(2+) as a cofactor. Requires Zn(2+) as cofactor.

The catalysed reaction is RNA(n) + a ribonucleoside 5'-triphosphate = RNA(n+1) + diphosphate. DNA-dependent RNA polymerase catalyzes the transcription of DNA into RNA using the four ribonucleoside triphosphates as substrates. This chain is DNA-directed RNA polymerase subunit beta', found in Acidovorax ebreus (strain TPSY) (Diaphorobacter sp. (strain TPSY)).